The primary structure comprises 391 residues: Homocysteine-responsive endoplasmic reticulum-resident ubiquitin-like domain member 1 protein (391 aa).

Met-1 is subject to N-acetylmethionine. The Cytoplasmic segment spans residues 1 to 263 (MEPEPQPEPV…VEEDDEINRD (263 aa)). One can recognise a Ubiquitin-like domain in the interval 10–72 (VTLLVKSPNQ…LLDHQCLQDL (63 aa)). The disordered stretch occupies residues 90–126 (NPSKMPETSTKGAESTEQPDNSNQTQHPGDSSSDGLR). Polar residues predominate over residues 95-124 (PETSTKGAESTEQPDNSNQTQHPGDSSSDG). The interaction with UBQLN1 stretch occupies residues 115 to 200 (QHPGDSSSDG…ASGTFVPTPS (86 aa)). Ser-135 carries the phosphoserine modification. A helical transmembrane segment spans residues 264–284 (WLDWTYSAATFSVFLSILYFY). Topologically, residues 285-289 (SSLSR) are lumenal. A helical transmembrane segment spans residues 290 to 310 (FLMVMGATVVMYLHHVGWFPF). Topologically, residues 311 to 391 (RQRPVQNFPD…LPEGPPALAN (81 aa)) are cytoplasmic. The tract at residues 317-361 (NFPDDGGPRDAANQDPNNNLQGGMDPEMEDPNRLPPDREVLDPEH) is disordered. Over residues 346–361 (DPNRLPPDREVLDPEH) the composition is skewed to basic and acidic residues.

Interacts with PSEN1 and PSEN2. Interacts with UBXN6. Interacts with UBQLN1, UBQLN2 and UBQLN4. Component of the HRD1 complex, which comprises at least SYNV1/HRD1, FAM8A1, HERPUD1/HERP, OS9, SEL1L and UBE2J1. FAM8A1 binding to SYNV1 may promote recruitment of HERPUD1 to the HRD1 complex.

Its subcellular location is the endoplasmic reticulum membrane. Functionally, component of the endoplasmic reticulum quality control (ERQC) system also called ER-associated degradation (ERAD) involved in ubiquitin-dependent degradation of misfolded endoplasmic reticulum proteins. Binds to ubiquilins and this interaction is required for efficient degradation of CD3D via the ERAD pathway. This chain is Homocysteine-responsive endoplasmic reticulum-resident ubiquitin-like domain member 1 protein (Herpud1), found in Mus musculus (Mouse).